Reading from the N-terminus, the 244-residue chain is Probable transcriptional regulatory protein CBU_1566 (244 aa).

Belongs to the TACO1 family.

It localises to the cytoplasm. This Coxiella burnetii (strain RSA 493 / Nine Mile phase I) protein is Probable transcriptional regulatory protein CBU_1566.